The chain runs to 515 residues: MKKLKINYLFIGILTLLLAAALWPSIPWFGKADNRIAAIQSRGELRVSTIESPLTYARINGKKYGLDYELAQQFASYLGVKLKITVRQNISQLFDDLDNGNADLLAAGLVYNSERVKNYQPGPTYYSVSQQLVYRVGQYRPRTLATVNESQLSIAPGHVVVNDLQALKETKFPDLSWKVDDKKGTAALLSEVISGNLDYTIADSVAISLFQRVHPELAVALDVTDEQPVTWFSQLDDDNTLSAALLDFFNTINEDGSLARMEEKYLGHGDDFDYVDTRTFLRAVDGVLPDLQPLFEKYAQEIDWRLLAAISYQESHWDPLATSPTGVRGLMMLTKNTAQSLGLTDRTDAEQSISGGVRYIQDMMGKVPETVPEEERIWFALAAYNMGYAHMLDARALTVKTRGNPDSWADVKQRLPLLSQKQYYSKLTYGYARGHEAYAYVENIRKYQISLVGYLQEKEKQAAEAIKLAQDYPAVSPAEFDTETFPFSSFLSQPSSNYLSHSPSLPFSLKKKDEN.

Positions 1 to 32 are cleaved as a signal peptide; the sequence is MKKLKINYLFIGILTLLLAAALWPSIPWFGKA. The tract at residues 33 to 269 is non-LT domain; that stretch reads DNRIAAIQSR…RMEEKYLGHG (237 aa). Residues 270–515 are LT domain; sequence DDFDYVDTRT…PFSLKKKDEN (246 aa). The active site involves Glu314. The tract at residues 493–515 is disordered; it reads QPSSNYLSHSPSLPFSLKKKDEN.

This sequence in the N-terminal section; belongs to the bacterial solute-binding protein 3 family. The protein in the C-terminal section; belongs to the transglycosylase Slt family.

The protein resides in the cell outer membrane. It carries out the reaction Exolytic cleavage of the (1-&gt;4)-beta-glycosidic linkage between N-acetylmuramic acid (MurNAc) and N-acetylglucosamine (GlcNAc) residues in peptidoglycan, from either the reducing or the non-reducing ends of the peptidoglycan chains, with concomitant formation of a 1,6-anhydrobond in the MurNAc residue.. Murein-degrading enzyme that degrades murein glycan strands and insoluble, high-molecular weight murein sacculi, with the concomitant formation of a 1,6-anhydromuramoyl product. Lytic transglycosylases (LTs) play an integral role in the metabolism of the peptidoglycan (PG) sacculus. Their lytic action creates space within the PG sacculus to allow for its expansion as well as for the insertion of various structures such as secretion systems and flagella. This chain is Membrane-bound lytic murein transglycosylase F, found in Citrobacter koseri (strain ATCC BAA-895 / CDC 4225-83 / SGSC4696).